The sequence spans 1544 residues: Arf-GAP with Rho-GAP domain, ANK repeat and PH domain-containing protein 3 (1544 aa).

The SAM domain occupies 4-68 (PQDLDIAVWL…LRLLQTGTEE (65 aa)). Disordered stretches follow at residues 64–147 (TGTE…EQSS) and 167–194 (GRAQAAQDKAPDSSQISAPTPALRPTTG). 2 stretches are compositionally biased toward pro residues: residues 82–97 (SPSPAPQAQPPKPVPK) and 130–139 (EPSPRPPPLP). PH domains are found at residues 287-379 (TPLL…SCLK) and 394-483 (RPLR…EAVT). In terms of domain architecture, Arf-GAP spans 480-611 (EAVTETLSDY…LFRKPHPQYP (132 aa)). A C4-type zinc finger spans residues 504 to 527 (CADCGSSRPDWAAVNLGVVICKQC). Residues 907–1088 (TGLQEQQMSR…ELIDGYISVF (182 aa)) enclose the Rho-GAP domain. The region spanning 1117 to 1210 (GDLIMEVYIE…ASLLLKKVPL (94 aa)) is the Ras-associating domain. The PH 3 domain maps to 1223-1325 (ESPRVGLLRC…WTTSILKAQH (103 aa)). Threonine 1348 is modified (phosphothreonine). A phosphotyrosine mark is found at tyrosine 1403 and tyrosine 1408. The tract at residues 1422-1544 (STSFSTTREW…SSPPSSQPLT (123 aa)) is disordered. Residues 1438–1457 (PLTSQKSLDQPFLSKSSTLG) are compositionally biased toward polar residues. Phosphoserine occurs at positions 1444 and 1480. Low complexity-rich tracts occupy residues 1482–1492 (EEQLLQELSSL) and 1502–1527 (GLGSPSQPSSPQSPSPTGLPTQTPGF).

As to quaternary structure, interacts (via SAM domain) with INPPL1/SHIP2. Tyrosine phosphorylated at a low basal level. PDGF treatment stimulates phosphorylation. Tyrosine phosphorylation is increased in cells that are in the process of becoming attached to a substrate and that start spreading and flattening.

Its subcellular location is the cytoplasm. The protein resides in the cytoskeleton. It is found in the cell membrane. It localises to the cell projection. The protein localises to the lamellipodium. Its subcellular location is the ruffle. Phosphatidylinositol 3,4,5-trisphosphate-dependent GTPase-activating protein that modulates actin cytoskeleton remodeling by regulating ARF and RHO family members. Is activated by phosphatidylinositol 3,4,5-trisphosphate (PtdIns(3,4,5)P3) binding. Can be activated by phosphatidylinositol 3,4-bisphosphate (PtdIns(3,4,5)P2) binding, albeit with lower efficiency. Acts on ARF6, RAC1, RHOA and CDC42. Plays a role in the internalization of anthrax toxin. This is Arf-GAP with Rho-GAP domain, ANK repeat and PH domain-containing protein 3 (ARAP3) from Homo sapiens (Human).